Here is a 483-residue protein sequence, read N- to C-terminus: Glucose-1-phosphate adenylyltransferase large subunit 3, chloroplastic/amyloplastic (483 aa).

This sequence belongs to the bacterial/plant glucose-1-phosphate adenylyltransferase family. Heterotetramer. In terms of tissue distribution, tubers.

It is found in the plastid. It localises to the chloroplast. Its subcellular location is the amyloplast. It catalyses the reaction alpha-D-glucose 1-phosphate + ATP + H(+) = ADP-alpha-D-glucose + diphosphate. It functions in the pathway glycan biosynthesis; starch biosynthesis. Activated by 3'phosphoglycerate, inhibited by orthophosphate. Allosteric regulation. Functionally, this protein plays a role in synthesis of starch. It catalyzes the synthesis of the activated glycosyl donor, ADP-glucose from Glc-1-P and ATP. The chain is Glucose-1-phosphate adenylyltransferase large subunit 3, chloroplastic/amyloplastic (AGPS3) from Solanum tuberosum (Potato).